Here is a 691-residue protein sequence, read N- to C-terminus: Elongation factor G (691 aa).

The region spanning 8–283 (EKQRNIGIMA…AVVQYLPSPL (276 aa)) is the tr-type G domain. Residues 17 to 24 (AHIDAGKT), 81 to 85 (DTPGH), and 135 to 138 (NKMD) each bind GTP.

It belongs to the TRAFAC class translation factor GTPase superfamily. Classic translation factor GTPase family. EF-G/EF-2 subfamily.

The protein resides in the cytoplasm. Its function is as follows. Catalyzes the GTP-dependent ribosomal translocation step during translation elongation. During this step, the ribosome changes from the pre-translocational (PRE) to the post-translocational (POST) state as the newly formed A-site-bound peptidyl-tRNA and P-site-bound deacylated tRNA move to the P and E sites, respectively. Catalyzes the coordinated movement of the two tRNA molecules, the mRNA and conformational changes in the ribosome. The polypeptide is Elongation factor G (Lawsonia intracellularis (strain PHE/MN1-00)).